A 710-amino-acid polypeptide reads, in one-letter code: Adenylosuccinate synthetase (710 aa).

2 disordered regions span residues M1–K57 and M82–C112. A compositionally biased stretch (low complexity) spans N11–S25. Residues S32–S43 show a composition bias toward polar residues. Residues G180–K186 and G210–T212 each bind GTP. Catalysis depends on D181, which acts as the Proton acceptor. Positions 181 and 210 each coordinate Mg(2+). IMP is bound by residues D181–K184, N208–H211, T295, K309, Q421, T437, and K567. Residue H211 is the Proton donor of the active site. A563 to R569 contacts substrate. Residues R569 and G697–G699 each bind GTP.

It belongs to the adenylosuccinate synthetase family. In terms of assembly, homodimer. Requires Mg(2+) as cofactor.

It localises to the cytoplasm. It carries out the reaction IMP + L-aspartate + GTP = N(6)-(1,2-dicarboxyethyl)-AMP + GDP + phosphate + 2 H(+). It participates in purine metabolism; AMP biosynthesis via de novo pathway; AMP from IMP: step 1/2. In terms of biological role, plays an important role in the salvage pathway for purine nucleotide biosynthesis. Catalyzes the first committed step in the biosynthesis of AMP from IMP. This is Adenylosuccinate synthetase from Leishmania braziliensis.